Here is a 192-residue protein sequence, read N- to C-terminus: Outer-membrane lipoprotein LolB (192 aa).

The signal sequence occupies residues 1 to 17 (MTYRTLCILAFTALISA). The N-palmitoyl cysteine moiety is linked to residue cysteine 18. Cysteine 18 carries S-diacylglycerol cysteine lipidation.

This sequence belongs to the LolB family. In terms of assembly, monomer.

It localises to the cell outer membrane. Its function is as follows. Plays a critical role in the incorporation of lipoproteins in the outer membrane after they are released by the LolA protein. The polypeptide is Outer-membrane lipoprotein LolB (Marinomonas sp. (strain MWYL1)).